The sequence spans 438 residues: Methylenetetrahydrofolate--tRNA-(uracil-5-)-methyltransferase TrmFO (438 aa).

10–15 (GGGLAG) contacts FAD.

Belongs to the MnmG family. TrmFO subfamily. FAD is required as a cofactor.

The protein localises to the cytoplasm. The catalysed reaction is uridine(54) in tRNA + (6R)-5,10-methylene-5,6,7,8-tetrahydrofolate + NADH + H(+) = 5-methyluridine(54) in tRNA + (6S)-5,6,7,8-tetrahydrofolate + NAD(+). It catalyses the reaction uridine(54) in tRNA + (6R)-5,10-methylene-5,6,7,8-tetrahydrofolate + NADPH + H(+) = 5-methyluridine(54) in tRNA + (6S)-5,6,7,8-tetrahydrofolate + NADP(+). In terms of biological role, catalyzes the folate-dependent formation of 5-methyl-uridine at position 54 (M-5-U54) in all tRNAs. This chain is Methylenetetrahydrofolate--tRNA-(uracil-5-)-methyltransferase TrmFO, found in Trichormus variabilis (strain ATCC 29413 / PCC 7937) (Anabaena variabilis).